The primary structure comprises 324 residues: Polycomb complex protein BMI-1-B (324 aa).

The RING-type zinc finger occupies 18 to 57; that stretch reads CVLCGGYFIDATTIVECLHSFCKMCIVRYLETSKYCPICD. Residues 81 to 95 carry the Nuclear localization signal motif; sequence KLVPGLFKNEMKRRR. The disordered stretch occupies residues 232-324; that stretch reads IKLSSPRNDM…TSHNGSNSLG (93 aa). Over residues 256 to 279 the composition is skewed to low complexity; it reads DKPNSPSIVAAPSTSSSMPSPNTP. Polar residues-rich tracts occupy residues 280-295 and 303-324; these read VQST…TING and NGQT…NSLG.

In terms of assembly, component of a PRC1-like complex. Homodimer. Interacts with cbx2.

The protein resides in the nucleus. In terms of biological role, component of a Polycomb group (PcG) multiprotein PRC1-like complex, a complex class required to maintain the transcriptionally repressive state of many genes, including Hox genes, throughout development. PcG PRC1 complex acts via chromatin remodeling and modification of histones; it mediates monoubiquitination of histone H2A 'Lys-119', rendering chromatin heritably changed in its expressibility. In the PRC1 complex, it is required to stimulate the E3 ubiquitin-protein ligase activity of rnf2. The polypeptide is Polycomb complex protein BMI-1-B (bmi1b) (Danio rerio (Zebrafish)).